A 70-amino-acid polypeptide reads, in one-letter code: Small ribosomal subunit protein bS21 (70 aa).

This sequence belongs to the bacterial ribosomal protein bS21 family.

The chain is Small ribosomal subunit protein bS21 from Bordetella avium (strain 197N).